The sequence spans 567 residues: UPF0313 protein Tpet_0582 (567 aa).

One can recognise a Radical SAM core domain in the interval 288-560; sequence KAIETVKFSI…NKMKENVLFK (273 aa). Residues Cys303, Cys307, and Cys310 each coordinate [4Fe-4S] cluster.

The protein belongs to the UPF0313 family. The cofactor is [4Fe-4S] cluster.

The chain is UPF0313 protein Tpet_0582 from Thermotoga petrophila (strain ATCC BAA-488 / DSM 13995 / JCM 10881 / RKU-1).